A 439-amino-acid chain; its full sequence is uncharacterized protein (439 aa).

A TRAM domain is found at Met-1 to Ser-55. Cys-68, Cys-74, Cys-77, and Cys-149 together coordinate [4Fe-4S] cluster. Positions 272, 301, 322, and 367 each coordinate S-adenosyl-L-methionine. Cys-394 functions as the Nucleophile in the catalytic mechanism.

This sequence belongs to the class I-like SAM-binding methyltransferase superfamily. RNA M5U methyltransferase family.

This is an uncharacterized protein from Thermotoga maritima (strain ATCC 43589 / DSM 3109 / JCM 10099 / NBRC 100826 / MSB8).